A 1265-amino-acid chain; its full sequence is 1-phosphatidylinositol 4,5-bisphosphate phosphodiesterase gamma-2 (1265 aa).

Residues 20-131 (RALELGTVMT…WLSGLKILHQ (112 aa)) enclose the PH domain. In terms of domain architecture, PI-PLC X-box spans 312–456 (QDMNNPLSHY…LREKIIIKHK (145 aa)). Catalysis depends on residues His-327 and His-372. SH2 domains lie at 532–635 (WFHK…TDPV) and 646–735 (WYYD…RYPV). Phosphotyrosine; by BTK is present on residues Tyr-753 and Tyr-759. The region spanning 769–829 (MPQRTVKALY…PSNYVEDISA (61 aa)) is the SH3 domain. Residues 930–1044 (LSDLVVYCKP…GYVLQPESMR (115 aa)) form the PI-PLC Y-box domain. A C2 domain is found at 1038 to 1169 (LQPESMRSEK…SGFRSVPLKN (132 aa)). Position 1197 is a phosphotyrosine; by BTK (Tyr-1197). Phosphotyrosine is present on residues Tyr-1217 and Tyr-1245.

Part of a complex composed of EEIG1, TNFRSF11A/RANK, PLCG2, GAB2, TEC and BTK; complex formation increases in the presence of TNFSF11/RANKL. Interacts (via SH2 domain) with CSF1R (tyrosine phosphorylated). Interacts constitutively with THEMIS2. It depends on Ca(2+) as a cofactor. Phosphorylated on tyrosine residues by CSF1R. Phosphorylated on tyrosine residues by BTK and SYK; upon ligand-induced activation of a variety of growth factor receptors and immune system receptors. Phosphorylation leads to increased phospholipase activity.

The protein localises to the membrane raft. It catalyses the reaction a 1,2-diacyl-sn-glycero-3-phospho-(1D-myo-inositol-4,5-bisphosphate) + H2O = 1D-myo-inositol 1,4,5-trisphosphate + a 1,2-diacyl-sn-glycerol + H(+). In terms of biological role, the production of the second messenger molecules diacylglycerol (DAG) and inositol 1,4,5-trisphosphate (IP3) is mediated by activated phosphatidylinositol-specific phospholipase C enzymes. It is a crucial enzyme in transmembrane signaling. This Rattus norvegicus (Rat) protein is 1-phosphatidylinositol 4,5-bisphosphate phosphodiesterase gamma-2.